Consider the following 420-residue polypeptide: Histidine--tRNA ligase (420 aa).

It belongs to the class-II aminoacyl-tRNA synthetase family. In terms of assembly, homodimer.

It localises to the cytoplasm. It carries out the reaction tRNA(His) + L-histidine + ATP = L-histidyl-tRNA(His) + AMP + diphosphate + H(+). The chain is Histidine--tRNA ligase from Thermotoga petrophila (strain ATCC BAA-488 / DSM 13995 / JCM 10881 / RKU-1).